A 383-amino-acid polypeptide reads, in one-letter code: Glutaminyl-peptide cyclotransferase-like protein (383 aa).

The helical transmembrane segment at V33–W53 threads the bilayer. C168 and C192 are disulfide-bonded. D187 provides a ligand contact to Zn(2+). E226 serves as the catalytic Proton acceptor. E227 contributes to the Zn(2+) binding site. D270 (proton acceptor) is an active-site residue. H352 provides a ligand contact to Zn(2+).

The protein belongs to the glutaminyl-peptide cyclotransferase family. In terms of tissue distribution, detected in thalamus, hippocampus, brain cortex, cerebellum, kidney, lung and liver, and at low levels in heart and spleen.

It localises to the golgi apparatus membrane. It catalyses the reaction N-terminal L-glutaminyl-[peptide] = N-terminal 5-oxo-L-prolyl-[peptide] + NH4(+). Its function is as follows. Responsible for the biosynthesis of pyroglutamyl peptides. This Mus musculus (Mouse) protein is Glutaminyl-peptide cyclotransferase-like protein (Qpctl).